The sequence spans 551 residues: Glutamate--tRNA ligase (551 aa).

Residues 100–110 carry the 'HIGH' region motif; it reads PNPNGPPTLGS.

Belongs to the class-I aminoacyl-tRNA synthetase family. Glutamate--tRNA ligase type 2 subfamily.

The protein resides in the cytoplasm. The catalysed reaction is tRNA(Glu) + L-glutamate + ATP = L-glutamyl-tRNA(Glu) + AMP + diphosphate. Its function is as follows. Catalyzes the attachment of glutamate to tRNA(Glu) in a two-step reaction: glutamate is first activated by ATP to form Glu-AMP and then transferred to the acceptor end of tRNA(Glu). This is Glutamate--tRNA ligase from Archaeoglobus fulgidus (strain ATCC 49558 / DSM 4304 / JCM 9628 / NBRC 100126 / VC-16).